We begin with the raw amino-acid sequence, 446 residues long: Inward rectifier potassium channel 4 (446 aa).

Residues 1-55 (MHGHSRNGQAHVPRRKRRNRFVKKNGQCNVYFANLSNKSQRYMADIFTTCVDTRW) are Cytoplasmic-facing. A helical transmembrane segment spans residues 56-80 (RYMLMIFSAAFLVSWLFFGLLFWCI). At 81–120 (AFFHGDLEPSPSGPTAGGPGGNGGGAAPTAAKPCIMHVNG) the chain is on the extracellular side. The tract at residues 91 to 111 (PSGPTAGGPGGNGGGAAPTAA) is val/Gly/Ala/Pro stretch. Residues 121–132 (FLGAFLFSVETQ) constitute an intramembrane region (helical; Pore-forming). The segment at residues 133 to 139 (TTIGYGF) is an intramembrane region (pore-forming). The Selectivity filter motif lies at 134–139 (TIGYGF). The Extracellular portion of the chain corresponds to 140–148 (RCVTEECPL). Residues 149–170 (AVIAVVVQSIVGCVIDSFMIGT) form a helical membrane-spanning segment. At 171 to 446 (IMAKMPRPKK…NISYRRESAI (276 aa)) the chain is on the cytoplasmic side. A PDZ-binding motif is present at residues 444-446 (SAI).

The protein belongs to the inward rectifier-type potassium channel (TC 1.A.2.1) family. KCNJ4 subfamily. In terms of assembly, homomultimeric and heteromultimeric association with KCNJ2 and KCNJ12. Interacts with DLG2 and DLG4. Associates, via its PDZ-recognition domain, with a complex containing LIN7A, LIN7B, LIN7C, DLG1, CASK and APBA1. Interacts with TAX1BP3. TAX1BP3 competes with LIN7 family members for KCNJ4 binding. Detected in kidney distal convoluted tubules (at protein level). Widely expressed throughout the brain. Also found in some peripheral tissues.

It is found in the cell membrane. The protein localises to the cytoplasmic vesicle membrane. The protein resides in the postsynaptic cell membrane. The enzyme catalyses K(+)(in) = K(+)(out). In terms of biological role, inward rectifier potassium channels are characterized by a greater tendency to allow potassium to flow into the cell rather than out of it. Their voltage dependence is regulated by the concentration of extracellular potassium; as external potassium is raised, the voltage range of the channel opening shifts to more positive voltages. The inward rectification is mainly due to the blockage of outward current by internal magnesium. Can be blocked by extracellular barium and cesium. This is Inward rectifier potassium channel 4 (Kcnj4) from Rattus norvegicus (Rat).